The sequence spans 603 residues: Pentatricopeptide repeat-containing protein At2g02980, chloroplastic (603 aa).

Residues M1–K38 constitute a chloroplast transit peptide. 10 PPR repeats span residues D93–P127, D128–D162, N163–P193, C194–P228, N229–K263, Y264–K294, D295–P329, D330–P365, S366–M400, and H432–K466. The segment at L401 to N476 is type E motif. Residues N477–K507 form a type E(+) motif region. The type DYW motif stretch occupies residues L508–W603.

This sequence belongs to the PPR family. PCMP-H subfamily.

The protein resides in the plastid. Its subcellular location is the chloroplast. Its function is as follows. Involved in RNA editing event in chloroplasts. Required for the editing of a single site in ndhD transcript, which is a plastid-encoded subunits of the chloroplast NAD(P)H dehydrogenase (NDH) complex. Not essential for the activity of the NDH complex of the photosynthetic electron transport chain. In Arabidopsis thaliana (Mouse-ear cress), this protein is Pentatricopeptide repeat-containing protein At2g02980, chloroplastic (PCMP-H26).